We begin with the raw amino-acid sequence, 339 residues long: Erlin-2 (339 aa).

The Cytoplasmic segment spans residues 1 to 3 (MAQ). A helical membrane pass occupies residues 4–24 (LGAVVAVASSFFCASLFSAVH). Residues 25-339 (KIEEGHIGVY…EPLETATKEN (315 aa)) lie on the Lumenal side of the membrane. N-linked (GlcNAc...) asparagine glycosylation is present at Asn-106. Residues 177-309 (EAIRRNYELM…DIPNMFMDSA (133 aa)) are interaction with ERLIN1. An N6-acetyllysine modification is found at Lys-267.

The protein belongs to the band 7/mec-2 family. In terms of assembly, forms a heteromeric complex with ERLIN1. In complex with ERLIN1, interacts with RNF170. Interacts with activated ITPR1, independently of the degree of ITPR1 polyubiquitination. Interacts with SCAP, INSIG1, SREBF1 and SREBF2 under cholesterol sufficiency conditions; indicative for an association with the SCAP-SREBP-INSIG complex. Probably part of an AMFR/gp78 and INSIG1-containing ubiquitin ligase complex involved in ERAD of HMGCR. Interacts with TMUB1; TMUB1 bridges the association with AMFR. Interacts with SYVN1 and RNF139. Interacts with TMEM259. Interacts with TMEM41B. Post-translationally, deubiquitinated by USP25; leading to stabilization. Ubiquitous.

Its subcellular location is the endoplasmic reticulum membrane. Functionally, component of the ERLIN1/ERLIN2 complex which mediates the endoplasmic reticulum-associated degradation (ERAD) of inositol 1,4,5-trisphosphate receptors (IP3Rs) such as ITPR1. Promotes sterol-accelerated ERAD of HMGCR probably implicating an AMFR/gp78-containing ubiquitin ligase complex. Involved in regulation of cellular cholesterol homeostasis by regulation the SREBP signaling pathway. May promote ER retention of the SCAP-SREBF complex. This chain is Erlin-2 (ERLIN2), found in Homo sapiens (Human).